The sequence spans 615 residues: DNA mismatch repair protein MutL (615 aa).

Positions 363 to 397 (FAEPAAREPVAPRYSPAPASGSRPAAPWPNAQPGY) are disordered. Positions 364-387 (AEPAAREPVAPRYSPAPASGSRPA) are enriched in low complexity.

The protein belongs to the DNA mismatch repair MutL/HexB family.

Its function is as follows. This protein is involved in the repair of mismatches in DNA. It is required for dam-dependent methyl-directed DNA mismatch repair. May act as a 'molecular matchmaker', a protein that promotes the formation of a stable complex between two or more DNA-binding proteins in an ATP-dependent manner without itself being part of a final effector complex. The protein is DNA mismatch repair protein MutL of Shigella flexneri.